The sequence spans 117 residues: Ig heavy chain V region 5-84 (117 aa).

Positions 1 to 19 (MNFGLSLIFLVLVLKGVLC) are cleaved as a signal peptide. The tract at residues 20–49 (EVKLVESGGGLVQPGGSLKLSCAASGFTFS) is framework-1. An intrachain disulfide couples C41 to C115. Positions 50 to 54 (SYTMS) are complementarity-determining-1. Residues 55-68 (WVRQTPEKRLEWVA) are framework-2. The tract at residues 69-85 (YISNGGGSTYYPDTVKG) is complementarity-determining-2. The framework-3 stretch occupies residues 86–117 (RFTISRDNAKNNLYLQMSSLKSEDTAMYYCAR).

This chain is Ig heavy chain V region 5-84, found in Mus musculus (Mouse).